The following is a 544-amino-acid chain: Chaperonin GroEL (544 aa).

Residues 29-32 (TLGP), 86-90 (DGTTT), G413, 476-478 (NAL), and D492 contribute to the ATP site.

This sequence belongs to the chaperonin (HSP60) family. As to quaternary structure, forms a cylinder of 14 subunits composed of two heptameric rings stacked back-to-back. Interacts with the co-chaperonin GroES.

It is found in the cytoplasm. The catalysed reaction is ATP + H2O + a folded polypeptide = ADP + phosphate + an unfolded polypeptide.. Its function is as follows. Together with its co-chaperonin GroES, plays an essential role in assisting protein folding. The GroEL-GroES system forms a nano-cage that allows encapsulation of the non-native substrate proteins and provides a physical environment optimized to promote and accelerate protein folding. This is Chaperonin GroEL from Desulfitobacterium hafniense (strain DSM 10664 / DCB-2).